The sequence spans 147 residues: MLMPKRVKRRRVHRGRMTGQATKGNKVTYGEYGLMALEPAWITSNQIEAARIAMTRSIKRGGKVWIKIFPHKPVTKKPAETRMGAGKGSPEFWVAVVKPGRIMFELAGVPEDKAREALRLAMHKLPIKTKFVTRQEQEVKGGEADEN.

The segment covering 1-16 (MLMPKRVKRRRVHRGR) has biased composition (basic residues). A disordered region spans residues 1 to 20 (MLMPKRVKRRRVHRGRMTGQ).

Belongs to the universal ribosomal protein uL16 family. As to quaternary structure, part of the 50S ribosomal subunit.

Functionally, binds 23S rRNA and is also seen to make contacts with the A and possibly P site tRNAs. The protein is Large ribosomal subunit protein uL16 of Alkaliphilus metalliredigens (strain QYMF).